A 196-amino-acid chain; its full sequence is Putative 3-methyladenine DNA glycosylase (196 aa).

This sequence belongs to the DNA glycosylase MPG family.

This Chlorobium phaeobacteroides (strain DSM 266 / SMG 266 / 2430) protein is Putative 3-methyladenine DNA glycosylase.